Reading from the N-terminus, the 428-residue chain is Enolase (428 aa).

Gln163 is a (2R)-2-phosphoglycerate binding site. The active-site Proton donor is Glu205. Mg(2+)-binding residues include Asp242, Glu286, and Asp313. The (2R)-2-phosphoglycerate site is built by Lys338, Arg367, Ser368, and Lys389. Lys338 serves as the catalytic Proton acceptor.

Belongs to the enolase family. The cofactor is Mg(2+).

The protein resides in the cytoplasm. The protein localises to the secreted. It is found in the cell surface. It catalyses the reaction (2R)-2-phosphoglycerate = phosphoenolpyruvate + H2O. Its pathway is carbohydrate degradation; glycolysis; pyruvate from D-glyceraldehyde 3-phosphate: step 4/5. Catalyzes the reversible conversion of 2-phosphoglycerate (2-PG) into phosphoenolpyruvate (PEP). It is essential for the degradation of carbohydrates via glycolysis. The polypeptide is Enolase (Lactobacillus helveticus (strain DPC 4571)).